We begin with the raw amino-acid sequence, 355 residues long: Galectin-9 (355 aa).

2 consecutive Galectin domains span residues 17–148 and 227–355; these read FTGM…ISFQ and FFTS…HVQT. A beta-D-galactoside-binding positions include Asn-48, His-61, Arg-65, Asn-75, 82-88, His-267, Arg-271, Thr-281, and 287-293; these read WGTEERK and WGSEERS.

Its subcellular location is the cytoplasm. The protein localises to the nucleus. It localises to the secreted. Binds galactosides. Has high affinity for the Forssman pentasaccharide. Ligand for HAVCR2/TIM3. Binding to HAVCR2 induces T-helper type 1 lymphocyte (Th1) death. Also stimulates bactericidal activity in infected macrophages by causing macrophage activation and IL1B secretion which restricts intracellular bacterial growth. Ligand for P4HB; the interaction retains P4HB at the cell surface of Th2 T helper cells, increasing disulfide reductase activity at the plasma membrane, altering the plasma membrane redox state and enhancing cell migration. Ligand for CD44; the interaction enhances binding of SMAD3 to the FOXP3 promoter, leading to up-regulation of FOXP3 expression and increased induced regulatory T (iTreg) cell stability and suppressive function. Promotes ability of mesenchymal stromal cells to suppress T-cell proliferation. Expands regulatory T-cells and induces cytotoxic T-cell apoptosis following virus infection. Activates ERK1/2 phosphorylation inducing cytokine (IL-6, IL-8, IL-12) and chemokine (CCL2) production in mast and dendritic cells. Inhibits degranulation and induces apoptosis of mast cells. Induces maturation and migration of dendritic cells. Inhibits natural killer (NK) cell function. Can transform NK cell phenotype from peripheral to decidual during pregnancy. Astrocyte derived galectin-9 enhances microglial TNF production. May play a role in thymocyte-epithelial interactions relevant to the biology of the thymus. May provide the molecular basis for urate flux across cell membranes, allowing urate that is formed during purine metabolism to efflux from cells and serving as an electrogenic transporter that plays an important role in renal and gastrointestinal urate excretion. Highly selective to the anion urate. The sequence is that of Galectin-9 (LGALS9) from Bos taurus (Bovine).